Here is a 447-residue protein sequence, read N- to C-terminus: Voltage-gated purine nucleotide uniporter SLC17A9 (447 aa).

The segment at 1 to 26 (MPSQRSSLMQPIPEETRKTPSAAAED) is disordered. The next 11 helical transmembrane spans lie at 40-60 (ILLL…VCTV), 74-94 (GIVL…GGHL), 103-123 (VILL…LLAH), 129-149 (LAFL…YFPA), 169-189 (TVGA…SVLL), 192-212 (CGWQ…AYYV), 252-272 (VWAA…LLSW), 287-307 (WVFN…SGFI), 327-347 (VMGL…TSFL), 380-400 (GFLF…GVCL), and 413-433 (CVFH…LVFG).

Belongs to the major facilitator superfamily. Sodium/anion cotransporter family. In brain, specifically expressed in the medulla and is associated with chromaffin granules (at protein level). Predominantly expressed in adrenal gland, brain and thyroid.

The protein resides in the cytoplasmic vesicle. Its subcellular location is the secretory vesicle. It localises to the chromaffin granule membrane. The protein localises to the secretory vesicle membrane. It is found in the lysosome membrane. The catalysed reaction is ATP(in) = ATP(out). It carries out the reaction ADP(in) = ADP(out). The enzyme catalyses GTP(in) = GTP(out). Activity is chloride-dependent. Functionally, voltage-gated ATP nucleotide uniporter that can also transport the purine nucleotides ADP and GTP. Uses the membrane potential as the driving force to control ATP accumulation in lysosomes and secretory vesicles. By controlling ATP storage in lysosomes, regulates ATP-dependent proteins of these organelles. Also indirectly regulates the exocytosis of ATP through its import into lysosomes in astrocytes and secretory vesicles such as adrenal chromaffin granules, mucin granules and synaptic vesicles. This is Voltage-gated purine nucleotide uniporter SLC17A9 from Mus musculus (Mouse).